We begin with the raw amino-acid sequence, 325 residues long: Probable arylamine N-acetyltransferase 1 (325 aa).

The active-site Acyl-thioester intermediate is C72. Catalysis depends on residues H112 and D127.

The protein belongs to the arylamine N-acetyltransferase family.

The enzyme catalyses an arylamine + acetyl-CoA = an N-acetylarylamine + CoA. The polypeptide is Probable arylamine N-acetyltransferase 1 (Dictyostelium discoideum (Social amoeba)).